A 264-amino-acid polypeptide reads, in one-letter code: tRNA-uridine aminocarboxypropyltransferase A (264 aa).

C25, C28, C35, and C37 together coordinate Zn(2+). The DXTW signature appears at 144-147 (DATW). The segment at 245–264 (RPKLLKKRFQNQQPLEQEEE) is disordered. A compositionally biased stretch (polar residues) spans 254–264 (QNQQPLEQEEE).

This sequence belongs to the TDD superfamily. DTWD2 family.

The enzyme catalyses a uridine in tRNA + S-adenosyl-L-methionine = a 3-[(3S)-3-amino-3-carboxypropyl]uridine in tRNA + S-methyl-5'-thioadenosine + H(+). Functionally, catalyzes the formation of 3-(3-amino-3-carboxypropyl)uridine (acp3U) at position 20a in the D-loop of several cytoplasmic tRNAs (acp3U(20a)). This is tRNA-uridine aminocarboxypropyltransferase A from Arabidopsis thaliana (Mouse-ear cress).